We begin with the raw amino-acid sequence, 599 residues long: DNA primase (599 aa).

Residues 38 to 62 (CPFHDEKTPSFTVSEDKQICHCFGC) form a CHC2-type zinc finger. In terms of domain architecture, Toprim spans 260–341 (DEIVLLEGFM…NVFVIQLPSG (82 aa)). 3 residues coordinate Mg(2+): Glu266, Asp310, and Asp312.

Belongs to the DnaG primase family. As to quaternary structure, monomer. Interacts with DnaB. The cofactor is Zn(2+). Requires Mg(2+) as cofactor.

It catalyses the reaction ssDNA + n NTP = ssDNA/pppN(pN)n-1 hybrid + (n-1) diphosphate.. In terms of biological role, RNA polymerase that catalyzes the synthesis of short RNA molecules used as primers for DNA polymerase during DNA replication. The sequence is that of DNA primase from Staphylococcus aureus (strain MRSA252).